Here is a 278-residue protein sequence, read N- to C-terminus: 3-methyl-2-oxobutanoate hydroxymethyltransferase 1 (278 aa).

D49 and D88 together coordinate Mg(2+). Residues 49–50 (DS), D88, and K118 contribute to the 3-methyl-2-oxobutanoate site. E120 contributes to the Mg(2+) binding site. Catalysis depends on E187, which acts as the Proton acceptor.

It belongs to the PanB family. As to quaternary structure, homodecamer; pentamer of dimers. Requires Mg(2+) as cofactor.

It localises to the cytoplasm. The catalysed reaction is 3-methyl-2-oxobutanoate + (6R)-5,10-methylene-5,6,7,8-tetrahydrofolate + H2O = 2-dehydropantoate + (6S)-5,6,7,8-tetrahydrofolate. It participates in cofactor biosynthesis; (R)-pantothenate biosynthesis; (R)-pantoate from 3-methyl-2-oxobutanoate: step 1/2. Functionally, catalyzes the reversible reaction in which hydroxymethyl group from 5,10-methylenetetrahydrofolate is transferred onto alpha-ketoisovalerate to form ketopantoate. The sequence is that of 3-methyl-2-oxobutanoate hydroxymethyltransferase 1 from Hahella chejuensis (strain KCTC 2396).